The following is a 255-amino-acid chain: MQFDVVTLFPDMFRALTDWGITSRAAKQERYSLRTWNPRDFTTDNYRTIDDRPYGGGPGMVMLARPLEDAIGAAKAAQAEQGIGAPRVVMMSPQGVTLNHDRVMRFAAEPGLILLCGRYEAIDQRLLDRVVDEEVSLGDFVLSGGELPAMALMDAVVRQLPGVLNDSQSAVQDSFVDVLLDCPHYTRPEEYNGVRVPDVLLGGHHAEIETWRRREALRNTLNKRPDLIVKARKNKMLSRADEAWLASLAKEESKA.

S-adenosyl-L-methionine is bound by residues Gly117 and Leu137–Leu142.

This sequence belongs to the RNA methyltransferase TrmD family. As to quaternary structure, homodimer.

It is found in the cytoplasm. The enzyme catalyses guanosine(37) in tRNA + S-adenosyl-L-methionine = N(1)-methylguanosine(37) in tRNA + S-adenosyl-L-homocysteine + H(+). Its function is as follows. Specifically methylates guanosine-37 in various tRNAs. The chain is tRNA (guanine-N(1)-)-methyltransferase from Paraburkholderia xenovorans (strain LB400).